The chain runs to 512 residues: Rab11 family-interacting protein 2 (512 aa).

The 120-residue stretch at Met-1 to Phe-120 folds into the C2 domain. A necessary for its cellular translocation to the plasma membrane region spans residues Val-15–Ala-102. 2 disordered regions span residues Arg-174 to Leu-231 and Pro-263 to Gly-287. Polar residues-rich tracts occupy residues Arg-221 to Leu-231 and Ser-277 to Gly-287. At Ser-227 the chain carries Phosphoserine; by MARK2. Ser-277 is modified (phosphoserine). An NPF 1 motif is present at residues Asn-323–Phe-325. Basic and acidic residues predominate over residues Lys-347 to Lys-374. Residues Lys-347–Ser-390 form a disordered region. Short sequence motifs (NPF) lie at residues Asn-406–Phe-408 and Asn-440–Phe-442. The 63-residue stretch at Pro-437 to Pro-499 folds into the FIP-RBD domain. Positions Glu-465–Ser-512 are necessary for interaction with AP2A1, RAB11A, subcellular location, endocytosis activity and homooligomerization.

Homooligomerizes in a Rab11-independent manner. Forms a heterooligomeric complex with RAB11FIP4. Interacts with AP2A1, MYO5B, RAB25 and REPS1. Interacts with RAB11A and RAB11B (activated GTP-bound form). Interacts with NPC1L1. Interacts (via NPF motifs) with EHD1 and EHD3. Interacts with TICAM2; this interaction directs RAB11FIP2 to the phagosome. Interacts with RAB14 and RAB25 (GTP-bound forms). Post-translationally, phosphorylation at Ser-227 by MARK2 regulates epithelial cell polarity.

The protein localises to the cell membrane. It is found in the recycling endosome membrane. A Rab11 effector binding preferentially phosphatidylinositol 3,4,5-trisphosphate (PtdInsP3) and phosphatidic acid (PA) and acting in the regulation of the transport of vesicles from the endosomal recycling compartment (ERC) to the plasma membrane. Involved in insulin granule exocytosis. Also involved in receptor-mediated endocytosis and membrane trafficking of recycling endosomes, probably originating from clathrin-coated vesicles. Required in a complex with MYO5B and RAB11 for the transport of NPC1L1 to the plasma membrane. Also acts as a regulator of cell polarity. Plays an essential role in phagocytosis through a mechanism involving TICAM2, RAC1 and CDC42 Rho GTPases for controlling actin-dynamics. This is Rab11 family-interacting protein 2 (Rab11fip2) from Mus musculus (Mouse).